The following is an 873-amino-acid chain: Alanine--tRNA ligase (873 aa).

Residues His-559, His-563, Cys-661, and His-665 each contribute to the Zn(2+) site.

Belongs to the class-II aminoacyl-tRNA synthetase family. It depends on Zn(2+) as a cofactor.

Its subcellular location is the cytoplasm. The catalysed reaction is tRNA(Ala) + L-alanine + ATP = L-alanyl-tRNA(Ala) + AMP + diphosphate. Its function is as follows. Catalyzes the attachment of alanine to tRNA(Ala) in a two-step reaction: alanine is first activated by ATP to form Ala-AMP and then transferred to the acceptor end of tRNA(Ala). Also edits incorrectly charged Ser-tRNA(Ala) and Gly-tRNA(Ala) via its editing domain. The polypeptide is Alanine--tRNA ligase (Acaryochloris marina (strain MBIC 11017)).